Here is a 341-residue protein sequence, read N- to C-terminus: Long-chain acyl-[acyl-carrier-protein] reductase (341 aa).

Belongs to the short-chain dehydrogenases/reductases (SDR) family. A divalent metal cation is required as a cofactor.

The enzyme catalyses a long-chain fatty aldehyde + holo-[ACP] + NADP(+) = a long-chain fatty acyl-[ACP] + NADPH + H(+). It catalyses the reaction a long-chain fatty aldehyde + holo-[ACP] + NAD(+) = a long-chain fatty acyl-[ACP] + NADH + H(+). In terms of biological role, catalyzes the NADP-dependent reduction of long-chain acyl-ACP to the corresponding fatty aldehyde. Involved in the biosynthesis of alkanes, mainly heptadecane and pentadecane, by producing the fatty aldehydes used by aldehyde decarbonylase. This is Long-chain acyl-[acyl-carrier-protein] reductase from Synechococcus elongatus (strain ATCC 33912 / PCC 7942 / FACHB-805) (Anacystis nidulans R2).